A 156-amino-acid chain; its full sequence is Ribosomal RNA large subunit methyltransferase H (156 aa).

S-adenosyl-L-methionine is bound by residues leucine 72, glycine 104, and 123 to 128 (LGKMVW).

Belongs to the RNA methyltransferase RlmH family. As to quaternary structure, homodimer.

It is found in the cytoplasm. The catalysed reaction is pseudouridine(1915) in 23S rRNA + S-adenosyl-L-methionine = N(3)-methylpseudouridine(1915) in 23S rRNA + S-adenosyl-L-homocysteine + H(+). Functionally, specifically methylates the pseudouridine at position 1915 (m3Psi1915) in 23S rRNA. The sequence is that of Ribosomal RNA large subunit methyltransferase H from Roseobacter denitrificans (strain ATCC 33942 / OCh 114) (Erythrobacter sp. (strain OCh 114)).